Reading from the N-terminus, the 479-residue chain is UPF0164 protein TP_0865 (479 aa).

Residues Met1–Ala49 form the signal peptide.

Belongs to the UPF0164 family.

The sequence is that of UPF0164 protein TP_0865 from Treponema pallidum (strain Nichols).